The primary structure comprises 126 residues: Large ribosomal subunit protein eL8 (126 aa).

This sequence belongs to the eukaryotic ribosomal protein eL8 family. Part of the 50S ribosomal subunit. Probably part of the RNase P complex.

It is found in the cytoplasm. Functionally, multifunctional RNA-binding protein that recognizes the K-turn motif in ribosomal RNA, the RNA component of RNase P, box H/ACA, box C/D and box C'/D' sRNAs. This is Large ribosomal subunit protein eL8 from Sulfolobus acidocaldarius (strain ATCC 33909 / DSM 639 / JCM 8929 / NBRC 15157 / NCIMB 11770).